The following is a 556-amino-acid chain: Urocanate hydratase (556 aa).

Residues 53 to 54, glutamine 131, 177 to 179, glutamate 197, 243 to 244, 264 to 268, 274 to 275, and tyrosine 323 each bind NAD(+); these read GG, GMG, NA, QTSAH, and YL. Cysteine 411 is an active-site residue. An NAD(+)-binding site is contributed by glycine 493.

Belongs to the urocanase family. Requires NAD(+) as cofactor.

It localises to the cytoplasm. The enzyme catalyses 4-imidazolone-5-propanoate = trans-urocanate + H2O. It functions in the pathway amino-acid degradation; L-histidine degradation into L-glutamate; N-formimidoyl-L-glutamate from L-histidine: step 2/3. Catalyzes the conversion of urocanate to 4-imidazolone-5-propionate. The chain is Urocanate hydratase from Pseudomonas fluorescens (strain SBW25).